The following is a 736-amino-acid chain: Polyribonucleotide nucleotidyltransferase (736 aa).

2 residues coordinate Mg(2+): Asp-493 and Asp-499. The KH domain maps to 560 to 619 (PQHAELVVNPDAIRMIIGPGGKNIKQITTVTGAAIDINDSGKISIFAPTSEAMEQAKQMI). Residues 629–703 (GKNYKGKVRK…SRKAVLLEEE (75 aa)) form the S1 motif domain. The segment at 710–736 (EESSRFSKGNRNGDRSRHNNRERTRRT) is disordered. The span at 720–736 (RNGDRSRHNNRERTRRT) shows a compositional bias: basic and acidic residues.

This sequence belongs to the polyribonucleotide nucleotidyltransferase family. Mg(2+) serves as cofactor.

It localises to the cytoplasm. The catalysed reaction is RNA(n+1) + phosphate = RNA(n) + a ribonucleoside 5'-diphosphate. In terms of biological role, involved in mRNA degradation. Catalyzes the phosphorolysis of single-stranded polyribonucleotides processively in the 3'- to 5'-direction. In Lawsonia intracellularis (strain PHE/MN1-00), this protein is Polyribonucleotide nucleotidyltransferase.